The sequence spans 461 residues: MGKEKIHINIVVIGHVDSGKSTTTGHLIYKCGGIDKRTIEKFEKEAAEMGKGSFKYAWVLDKLKAERERGITIDISLWKFETGKYYITIIDAPGHRDFIKNMITGTSQADCAVLIVAGGVGEFEAGISKNGQTREHALLAFTLGVKQLIIGVNKMDSTEPPFSQKRFEEITKEVSAYIKKIGYNPATVPFVPISGWHGDNMLEASTNMPWFKGWKIERKEGNASGITLLEALDCIIPPQRPTNKPLRLPLQDVYKIGGIGTVPVGRVETGVLKPGMIVTFAPSNVTTEVKSVEMHHEALVEALPGDNVGFNVKNISVKDIRRGNVAGDSKNDPPMQAGSFTAQVIILNHPGQISAGYAPVLDCHTAHIACKFAELKQKIDRRSGKKLEDDPKFLKSGDAAIVEMIPGKPMCVETFSDYPPLGRFAVRDMRQTVAVGVIKGVDKKLASSGKVTKSAAKAGKK.

Gly2 bears the N,N,N-trimethylglycine mark. A tr-type G domain is found at 5 to 242 (KIHINIVVIG…DCIIPPQRPT (238 aa)). The G1 stretch occupies residues 14–21 (GHVDSGKS). 14-21 (GHVDSGKS) contributes to the GTP binding site. The G2 stretch occupies residues 70–74 (GITID). The tract at residues 91 to 94 (DAPG) is G3. GTP is bound by residues 91-95 (DAPGH) and 153-156 (NKMD). A G4 region spans residues 153 to 156 (NKMD). Residues 194–196 (SGW) are G5. 2 positions are modified to 5-glutamyl glycerylphosphorylethanolamine: Glu301 and Glu374.

Belongs to the TRAFAC class translation factor GTPase superfamily. Classic translation factor GTPase family. EF-Tu/EF-1A subfamily. Oocyte.

The protein localises to the cytoplasm. Its function is as follows. This protein promotes the GTP-dependent binding of aminoacyl-tRNA to the A-site of ribosomes during protein biosynthesis. In Xenopus laevis (African clawed frog), this protein is Elongation factor 1-alpha, oocyte form.